The following is a 543-amino-acid chain: EH domain-containing protein 2 (543 aa).

A phosphoserine mark is found at Ser-3 and Ser-44. The Dynamin-type G domain maps to 55–286; it reads FDGKPMVLVA…DLFRDIQGLP (232 aa). The tract at residues 65 to 72 is G1 motif; the sequence is GQYSTGKT. 65–72 serves as a coordination point for ATP; that stretch reads GQYSTGKT. The segment at 91–92 is G2 motif; that stretch reads EP. The interval 153 to 156 is G3 motif; sequence DTPG. A G4 motif region spans residues 219 to 222; the sequence is NKAD. Lys-220 serves as a coordination point for ATP. A region of interest (G5 motif) is located at residue Val-243. Trp-258 contacts ATP. The segment at 320 to 340 is mediates membrane-binding; it reads SVFGKENKKKQLIFKLPVIFA. Phosphoserine is present on residues Ser-438, Ser-468, Ser-470, Ser-484, and Ser-493. Residues 449-537 enclose the EH domain; the sequence is DKSKYDEIFY…RRLVPPSKRR (89 aa). Positions 481 to 516 constitute an EF-hand domain; it reads LPNSVLGRIWKLSDVDRDGMLDDEEFALASHLIEAK. Positions 494, 496, 498, 500, and 505 each coordinate Ca(2+). Residues 521 to 543 are disordered; that stretch reads GLPTNLPRRLVPPSKRRQKGSAE. Positions 534 to 543 are enriched in basic residues; sequence SKRRQKGSAE.

This sequence belongs to the TRAFAC class dynamin-like GTPase superfamily. Dynamin/Fzo/YdjA family. EHD subfamily. As to quaternary structure, homodimer and homooligomer. Interacts with EHD1. May also interact with EHD3 and EHD4. Interacts with MYOF. Interacts with EHBP1. Interacts with FER1L5 (via second C2 domain). Interacts with CAV1 in a cholesterol-dependent manner. Interacts (via EH domain) with PACSIN2 (via NPF motifs); this interaction probably stabilizes the caveolae.

Its subcellular location is the cell membrane. It localises to the membrane. The protein localises to the caveola. It is found in the endosome membrane. The protein resides in the cytoplasm. Its subcellular location is the cytosol. With respect to regulation, the very low intrinsic ATPase activity is increased upon interaction with liposomes. Its function is as follows. ATP- and membrane-binding protein that controls membrane reorganization/tubulation upon ATP hydrolysis. Plays a role in membrane trafficking between the plasma membrane and endosomes. Important for the internalization of GLUT4. Required for fusion of myoblasts to skeletal muscle myotubes. Required for normal translocation of FER1L5 to the plasma membrane. Regulates the equilibrium between cell surface-associated and cell surface-dissociated caveolae by constraining caveolae at the cell membrane. The chain is EH domain-containing protein 2 from Rattus norvegicus (Rat).